The primary structure comprises 373 residues: Transcription factor NF-E2 45 kDa subunit (373 aa).

Positions 1–83 (MSPCPPQQSR…SGFPLPPPPY (83 aa)) are required for interaction with MAPK8. The segment at 1–206 (MSPCPPQQSR…PAAETPLALE (206 aa)) is transactivation domain. 2 short sequence motifs (PXY motif) span residues 61 to 65 (PPTTY) and 79 to 83 (PPPPY). Residues 127 to 150 (LDIGLPAGPPKPQEDPESDSGLSL) form a disordered region. Ser157 carries the phosphoserine; by MAPK8 modification. Residue Ser170 is modified to Phosphoserine; by PKA. The tract at residues 205–226 (LEPSSGPVRAKPTARGEAGSRD) is disordered. Residues 266 to 329 (LVRDIRRRGK…EVMRQQLTEL (64 aa)) form the bZIP domain. The basic motif stretch occupies residues 268–287 (RDIRRRGKNKVAAQNCRKRK). The segment at 291–298 (IVQLEREL) is leucine-zipper. Lys368 participates in a covalent cross-link: Glycyl lysine isopeptide (Lys-Gly) (interchain with G-Cter in SUMO1).

The protein belongs to the bZIP family. CNC subfamily. In terms of assembly, homodimer; can bind DNA as a homodimer. Erythroid transcription activator nuclear factor erythroid-derived 2 (NF-E2), composed of a heterodimer of NFE2 and MAFK, possesses transactivation activity on beta-globin. Also forms high affinity heterodimer with MAFG; the interaction promotes erythropoiesis. Interacts (via the PXY motif 1) with ITCH (via the WW 1 domain); the interaction promotes 'Lys63'-linked ubiquitination of NFE2, translocates it to the cytoplasm and inhibits its transactivation activity. Interacts with KMT2D/MLL2; the interaction promotes transactivation of the beta-globin locus. Interacts with MAPK8 (phosphorylated form); the interaction leads to phosphorylation of NFE2 in undifferentiated cells. Post-translationally, phosphorylated on serine residues. In undifferentiated erythrocytes, phosphorylated by MAPK8 which then leads to ubiquitination and protein degradation. In terms of processing, sumoylated. Sumoylation is required for translocation to nuclear bodies PODs, anchoring to the gene loci, and transactivation of the beta-globin gene. Ubiquitinated mainly by 'Lys63'-linked ubiquitin. Polyubiquitination with 'Lys63'-linked ubiquitin by ITCH retains NFE2 in the cytoplasm preventing its transactivation activity. In undifferentiated erythrocyte, ubiquitinated after MAPK8-mediatd phosphorylation leading to protein degradation. Expressed in hematopoietic cells and also in colon and testis.

It localises to the nucleus. The protein resides in the PML body. It is found in the cytoplasm. Its function is as follows. Component of the NF-E2 complex essential for regulating erythroid and megakaryocytic maturation and differentiation. Binds to the hypersensitive site 2 (HS2) of the beta-globin control region (LCR). This subunit (NFE2) recognizes the TCAT/C sequence of the AP-1-like core palindrome present in a number of erythroid and megakaryocytic gene promoters. Requires MAFK or other small MAF proteins for binding to the NF-E2 motif. May play a role in all aspects of hemoglobin production from globin and heme synthesis to procurement of iron. This Homo sapiens (Human) protein is Transcription factor NF-E2 45 kDa subunit (NFE2).